A 1322-amino-acid polypeptide reads, in one-letter code: Putative DNA ligase 4 (1322 aa).

11 residues coordinate ATP: E265, K267, R272, R287, E317, F387, E497, K502, R513, K519, and K521. The N6-AMP-lysine intermediate role is filled by K267. Residue E317 coordinates Mg(2+). E497 is a binding site for Mg(2+). BRCT domains are found at residues 686 to 768 (LDVQ…PKFD) and 825 to 935 (ERFC…TYSL). Disordered regions lie at residues 945–1212 (IERS…SATC) and 1245–1310 (AEAK…KKVS). Residues 957–969 (DKLEENEKADTSH) are compositionally biased toward basic and acidic residues. 2 stretches are compositionally biased toward basic residues: residues 970–979 (VKHAPRKRGR) and 994–1005 (PVRRTRARRGNQ). 2 stretches are compositionally biased toward basic and acidic residues: residues 1007–1022 (AKID…HGET) and 1033–1047 (NISK…KDQV). The segment covering 1051 to 1063 (PVRRTRARRGKQH) has biased composition (basic residues). Basic and acidic residues-rich tracts occupy residues 1082-1104 (DDQR…RDQG), 1125-1161 (AKID…KDQE), and 1190-1204 (PKHE…RDTA). Low complexity predominate over residues 1261–1288 (SSYVAPVPQASASSASSSGVPAPHAGSS).

This sequence belongs to the ATP-dependent DNA ligase family. The cofactor is Mg(2+).

The protein resides in the nucleus. The enzyme catalyses ATP + (deoxyribonucleotide)n-3'-hydroxyl + 5'-phospho-(deoxyribonucleotide)m = (deoxyribonucleotide)n+m + AMP + diphosphate.. DNA ligase involved in DNA non-homologous end joining (NHEJ); required for double-strand break (DSB) repair. The protein is Putative DNA ligase 4 (LIG4) of Oryza sativa subsp. japonica (Rice).